A 91-amino-acid chain; its full sequence is Large ribosomal subunit protein bL31B (91 aa).

This sequence belongs to the bacterial ribosomal protein bL31 family. Type B subfamily. As to quaternary structure, part of the 50S ribosomal subunit.

This chain is Large ribosomal subunit protein bL31B, found in Neisseria gonorrhoeae (strain NCCP11945).